Reading from the N-terminus, the 219-residue chain is Deoxyribose-phosphate aldolase (219 aa).

Catalysis depends on aspartate 92, which acts as the Proton donor/acceptor. Residue lysine 154 is the Schiff-base intermediate with acetaldehyde of the active site. The Proton donor/acceptor role is filled by lysine 183.

This sequence belongs to the DeoC/FbaB aldolase family. DeoC type 1 subfamily.

Its subcellular location is the cytoplasm. The enzyme catalyses 2-deoxy-D-ribose 5-phosphate = D-glyceraldehyde 3-phosphate + acetaldehyde. The protein operates within carbohydrate degradation; 2-deoxy-D-ribose 1-phosphate degradation; D-glyceraldehyde 3-phosphate and acetaldehyde from 2-deoxy-alpha-D-ribose 1-phosphate: step 2/2. Functionally, catalyzes a reversible aldol reaction between acetaldehyde and D-glyceraldehyde 3-phosphate to generate 2-deoxy-D-ribose 5-phosphate. This chain is Deoxyribose-phosphate aldolase, found in Dictyoglomus turgidum (strain DSM 6724 / Z-1310).